Reading from the N-terminus, the 1174-residue chain is DNA-directed RNA polymerase subunit beta (1174 aa).

It belongs to the RNA polymerase beta chain family. The RNAP catalytic core consists of 2 alpha, 1 beta, 1 beta' and 1 omega subunit. When a sigma factor is associated with the core the holoenzyme is formed, which can initiate transcription.

It carries out the reaction RNA(n) + a ribonucleoside 5'-triphosphate = RNA(n+1) + diphosphate. Functionally, DNA-dependent RNA polymerase catalyzes the transcription of DNA into RNA using the four ribonucleoside triphosphates as substrates. In Mycolicibacterium gilvum (strain PYR-GCK) (Mycobacterium gilvum (strain PYR-GCK)), this protein is DNA-directed RNA polymerase subunit beta.